The chain runs to 155 residues: Small ribosomal subunit protein uS7c (155 aa).

This sequence belongs to the universal ribosomal protein uS7 family. As to quaternary structure, part of the 30S ribosomal subunit.

The protein resides in the plastid. It localises to the chloroplast. In terms of biological role, one of the primary rRNA binding proteins, it binds directly to 16S rRNA where it nucleates assembly of the head domain of the 30S subunit. The polypeptide is Small ribosomal subunit protein uS7c (rps7) (Silene latifolia (White campion)).